We begin with the raw amino-acid sequence, 877 residues long: EF-hand domain-containing family member B (877 aa).

Disordered regions lie at residues 1-47 (MCSF…GRKS) and 268-290 (AQQPEEQREAENTEPGVEPPDRI). EF-hand domains are found at residues 605 to 640 (QNFDTLLAAFRHYDKKGDGVIDRAELQEACDQACLH) and 641 to 676 (LDEKLLDQLFEYCDVDKDGLINYLEFANFLTWKDKT). Residues D618, D622, E629, D654, D656, D658, and E665 each coordinate Ca(2+).

As to quaternary structure, microtubule inner protein component of sperm flagellar doublet microtubules. Interacts with STIM1 and ORAI1; the interactions take place upon Ca(2+)-store depletion and dissociate through a Ca(2+)-dependent mechanism. Interaction with STIM1 inhibits STIM1 interaction with SARAF. As to expression, expressed in trachea multiciliated cells.

Its subcellular location is the cytoplasm. It is found in the cytoskeleton. The protein resides in the cilium axoneme. The protein localises to the flagellum axoneme. Functionally, microtubule inner protein (MIP) part of the dynein-decorated doublet microtubules (DMTs) in cilia axoneme, which is required for motile cilia beating. Cytosolic sensor for calcium, modulates the interaction of STIM1 and ORAI1 upon store depletion and the activation of store-operated Ca(2+) entry (SOCE) and NFAT translocation from cytosol to nucleus. The chain is EF-hand domain-containing family member B from Bos taurus (Bovine).